The sequence spans 149 residues: uncharacterized protein (149 aa).

This is an uncharacterized protein from Aquifex aeolicus (strain VF5).